The chain runs to 364 residues: DNA replication and repair protein RecF (364 aa).

30–37 (GENGSGKT) contacts ATP.

It belongs to the RecF family.

The protein localises to the cytoplasm. The RecF protein is involved in DNA metabolism; it is required for DNA replication and normal SOS inducibility. RecF binds preferentially to single-stranded, linear DNA. It also seems to bind ATP. This Xylella fastidiosa (strain M12) protein is DNA replication and repair protein RecF.